The chain runs to 713 residues: Polyribonucleotide nucleotidyltransferase (713 aa).

The Mg(2+) site is built by Asp-494 and Asp-500. Positions 561 to 623 (PSFSTMTIPK…EAVQSAEKRV (63 aa)) constitute a KH domain. Positions 633–702 (GDVYQGTVKS…KSGKYKLSRK (70 aa)) constitute an S1 motif domain.

The protein belongs to the polyribonucleotide nucleotidyltransferase family. It depends on Mg(2+) as a cofactor.

Its subcellular location is the cytoplasm. It catalyses the reaction RNA(n+1) + phosphate = RNA(n) + a ribonucleoside 5'-diphosphate. Involved in mRNA degradation. Catalyzes the phosphorolysis of single-stranded polyribonucleotides processively in the 3'- to 5'-direction. This chain is Polyribonucleotide nucleotidyltransferase, found in Amoebophilus asiaticus (strain 5a2).